Here is a 506-residue protein sequence, read N- to C-terminus: Nucleosome assembly protein 1-like 3 (506 aa).

Disordered regions lie at residues 1 to 95 and 157 to 307; these read MAEA…LGTN and PTEE…KRED. Positions 35–70 are enriched in low complexity; sequence SSSSSSSTSDSSSSSSTSGSSSGSGSSSSSSGSTSS. The segment covering 157–178 has biased composition (acidic residues); that stretch reads PTEEECEWNSEDEEFSSDEEVQ. Residues 196–296 are compositionally biased toward basic and acidic residues; the sequence is PKENPEVKAE…ERLQDSVDLK (101 aa).

This sequence belongs to the nucleosome assembly protein (NAP) family.

The protein localises to the nucleus. This is Nucleosome assembly protein 1-like 3 (NAP1L3) from Homo sapiens (Human).